The following is a 114-amino-acid chain: DNA-directed RNA polymerase subunit omega (114 aa).

Belongs to the RNA polymerase subunit omega family. The RNAP catalytic core consists of 2 alpha, 1 beta, 1 beta' and 1 omega subunit. When a sigma factor is associated with the core the holoenzyme is formed, which can initiate transcription.

It catalyses the reaction RNA(n) + a ribonucleoside 5'-triphosphate = RNA(n+1) + diphosphate. Functionally, promotes RNA polymerase assembly. Latches the N- and C-terminal regions of the beta' subunit thereby facilitating its interaction with the beta and alpha subunits. The polypeptide is DNA-directed RNA polymerase subunit omega (Erythrobacter litoralis (strain HTCC2594)).